The primary structure comprises 349 residues: Protein RecA (349 aa).

69 to 76 contacts ATP; it reads GPESSGKT.

It belongs to the RecA family.

Its subcellular location is the cytoplasm. Functionally, can catalyze the hydrolysis of ATP in the presence of single-stranded DNA, the ATP-dependent uptake of single-stranded DNA by duplex DNA, and the ATP-dependent hybridization of homologous single-stranded DNAs. It interacts with LexA causing its activation and leading to its autocatalytic cleavage. The protein is Protein RecA of Crocosphaera subtropica (strain ATCC 51142 / BH68) (Cyanothece sp. (strain ATCC 51142)).